The primary structure comprises 418 residues: MNLVAVGVNHTTADVELRERLAFSTQQAEVALASLREMPGVREAALLSTCNRTELYCLTDDVTPNFAQWLASSRNLSVERLSTVLYQHTGEQALEHMMRVAGGLDSLVLGEPQILGQMREAYARAHEAGLLNGELSRLFQEVFSVAKRIRTETGIGANPVSVAYAAVSFARHIFADLKKSRALLIGAGEMIELVARHLSEQQVQEITIANRTQERASELAAAVGGRGISLEELPVALERADILISCTAAPLPIMGKGMVERALKKRRHRPMFMVDIAVPRDIEPEVGELGDVYLYTVDHLQEAIQENVRSRQQAAQEASELIRDAIVRHRRQRREQDAVKVLRDYREQRKAMAESELEKALQQLRNGGDAEQVLRRFQHSLVNKWLHSPSVTLRKMAADGRAEALLLARELLLDDDQS.

Substrate-binding positions include threonine 49–arginine 52, serine 106, glutamate 111–glutamine 113, and glutamine 117. The Nucleophile role is filled by cysteine 50. NADP(+) is bound at residue glycine 186 to isoleucine 191.

The protein belongs to the glutamyl-tRNA reductase family. Homodimer.

It catalyses the reaction (S)-4-amino-5-oxopentanoate + tRNA(Glu) + NADP(+) = L-glutamyl-tRNA(Glu) + NADPH + H(+). It functions in the pathway porphyrin-containing compound metabolism; protoporphyrin-IX biosynthesis; 5-aminolevulinate from L-glutamyl-tRNA(Glu): step 1/2. Functionally, catalyzes the NADPH-dependent reduction of glutamyl-tRNA(Glu) to glutamate 1-semialdehyde (GSA). The sequence is that of Glutamyl-tRNA reductase from Alcanivorax borkumensis (strain ATCC 700651 / DSM 11573 / NCIMB 13689 / SK2).